A 392-amino-acid polypeptide reads, in one-letter code: Odorant receptor 85f (392 aa).

The Cytoplasmic segment spans residues methionine 1–arginine 36. A helical transmembrane segment spans residues isoleucine 37–methionine 57. Residues valine 58 to asparagine 69 lie on the Extracellular side of the membrane. Residue asparagine 69 is glycosylated (N-linked (GlcNAc...) asparagine). The chain crosses the membrane as a helical span at residues valine 70 to phenylalanine 90. At alanine 91–serine 130 the chain is on the cytoplasmic side. Residues phenylalanine 131–isoleucine 151 form a helical membrane-spanning segment. Residues threonine 152–aspartate 179 are Extracellular-facing. The chain crosses the membrane as a helical span at residues proline 180 to isoleucine 200. Topologically, residues serine 201–serine 268 are cytoplasmic. Residues leucine 269–isoleucine 289 traverse the membrane as a helical segment. At glutamine 290 to glutamate 295 the chain is on the extracellular side. The helical transmembrane segment at glycine 296 to tyrosine 316 threads the bilayer. Over glycine 317–methionine 363 the chain is Cytoplasmic. The helical transmembrane segment at glycine 364–isoleucine 384 threads the bilayer. At threonine 385 to glutamine 392 the chain is on the extracellular side.

This sequence belongs to the insect chemoreceptor superfamily. Heteromeric odorant receptor channel (TC 1.A.69) family. Or49a subfamily. Interacts with Orco. Complexes exist early in the endomembrane system in olfactory sensory neurons (OSNs), coupling these complexes to the conserved ciliary trafficking pathway. As to expression, expressed in olfactory sensory neurons in the antenna.

It is found in the cell membrane. Odorant receptor which mediates acceptance or avoidance behavior, depending on its substrates. The odorant receptor repertoire encodes a large collection of odor stimuli that vary widely in identity, intensity, and duration. May form a complex with Orco to form odorant-sensing units, providing sensitive and prolonged odorant signaling and calcium permeability. The chain is Odorant receptor 85f (Or85f) from Drosophila melanogaster (Fruit fly).